Reading from the N-terminus, the 1405-residue chain is DNA-directed RNA polymerase subunit beta' (1405 aa).

Zn(2+) contacts are provided by C71, C73, C86, and C89. Mg(2+) contacts are provided by D462, D464, and D466. Residues C820, C893, C900, and C903 each coordinate Zn(2+).

It belongs to the RNA polymerase beta' chain family. As to quaternary structure, the RNAP catalytic core consists of 2 alpha, 1 beta, 1 beta' and 1 omega subunit. When a sigma factor is associated with the core the holoenzyme is formed, which can initiate transcription. Mg(2+) is required as a cofactor. Zn(2+) serves as cofactor.

The enzyme catalyses RNA(n) + a ribonucleoside 5'-triphosphate = RNA(n+1) + diphosphate. DNA-dependent RNA polymerase catalyzes the transcription of DNA into RNA using the four ribonucleoside triphosphates as substrates. In Methylorubrum populi (strain ATCC BAA-705 / NCIMB 13946 / BJ001) (Methylobacterium populi), this protein is DNA-directed RNA polymerase subunit beta'.